The sequence spans 1499 residues: DNA-directed RNA polymerase subunit beta' (1499 aa).

Residues Cys67, Cys69, Cys82, and Cys85 each coordinate Zn(2+). 3 residues coordinate Mg(2+): Asp499, Asp501, and Asp503. Residues Cys867, Cys943, Cys950, and Cys953 each contribute to the Zn(2+) site.

Belongs to the RNA polymerase beta' chain family. The RNAP catalytic core consists of 2 alpha, 1 beta, 1 beta' and 1 omega subunit. When a sigma factor is associated with the core the holoenzyme is formed, which can initiate transcription. It depends on Mg(2+) as a cofactor. Zn(2+) is required as a cofactor.

It carries out the reaction RNA(n) + a ribonucleoside 5'-triphosphate = RNA(n+1) + diphosphate. In terms of biological role, DNA-dependent RNA polymerase catalyzes the transcription of DNA into RNA using the four ribonucleoside triphosphates as substrates. The sequence is that of DNA-directed RNA polymerase subunit beta' from Prosthecochloris aestuarii (strain DSM 271 / SK 413).